We begin with the raw amino-acid sequence, 93 residues long: Transcription factor PRE3 (93 aa).

The bHLH domain occupies 6–61; sequence SRSRQSSGTSRISEDQINDLIIKLQQLLPELRDSRRSDKVSAARVLQDTCNYIRNL.

Homodimer. Interacts with BHLH 147, BHLH148, BHLH149, BHLH150 and IBH1. Interacts with SIEL. In terms of tissue distribution, expressed in root and shoot meristems, and young siliques. Low levels detected in all aerial tissues.

It localises to the nucleus. The protein resides in the cytoplasm. Atypical and probable non DNA-binding bHLH transcription factor required for MONOPTEROS-dependent root initiation in embryo. Promotes the correct definition of the hypophysis cell division plane. Transcriptionally controlled by MONOPTEROS. Moves from its site of synthesis in pro-embryos cells into the hypophysis. Regulates brassinosteroid (BR) signaling by sequestering negative BR signaling components. May function as positive regulator of gibberellin signaling. May play a role in the regulation of light signaling and possibly auxin signaling. This is Transcription factor PRE3 (PRE3) from Arabidopsis thaliana (Mouse-ear cress).